Reading from the N-terminus, the 559-residue chain is Potassium-transporting ATPase potassium-binding subunit (559 aa).

13 helical membrane-spanning segments follow: residues 5–25 (GFLLIASFLLILLVLAKPLGS), 27–47 (LARLIAAVPLPGVAGIERILW), 63–83 (LLALLTLNLLGLGILFCLLFW), 132–152 (GLTVQNFLSAATGIAVVFALI), 170–190 (LVRITLWILFPVALIIALFFI), 253–273 (LAQMLAIFLIPAALCFAFGEA), 283–303 (LLWAMSFIFVVCVAVVMWAEV), 327–347 (FGVLASSLFAVVTTAASCGAV), 356–376 (ALGGMVPMWLMQIGEVVFGGV), 379–399 (GLYGMLLFVLLAVFIAGLMIG), 416–436 (MTALAILVTPMLVLLGSALAM), 484–504 (LLAFCMFVGRFGVIIPVMAIA), and 524–544 (GALFIGLLIGTVLLVGALTFI).

This sequence belongs to the KdpA family. In terms of assembly, the system is composed of three essential subunits: KdpA, KdpB and KdpC.

It localises to the cell inner membrane. Its function is as follows. Part of the high-affinity ATP-driven potassium transport (or Kdp) system, which catalyzes the hydrolysis of ATP coupled with the electrogenic transport of potassium into the cytoplasm. This subunit binds the periplasmic potassium ions and delivers the ions to the membrane domain of KdpB through an intramembrane tunnel. This is Potassium-transporting ATPase potassium-binding subunit from Salmonella typhimurium (strain LT2 / SGSC1412 / ATCC 700720).